The chain runs to 255 residues: 4-diphosphocytidyl-2-C-methyl-D-erythritol kinase (255 aa).

K6 is a catalytic residue. 95–105 (PVCAGLGGGSS) lines the ATP pocket. D137 is a catalytic residue.

Belongs to the GHMP kinase family. IspE subfamily.

The catalysed reaction is 4-CDP-2-C-methyl-D-erythritol + ATP = 4-CDP-2-C-methyl-D-erythritol 2-phosphate + ADP + H(+). It participates in isoprenoid biosynthesis; isopentenyl diphosphate biosynthesis via DXP pathway; isopentenyl diphosphate from 1-deoxy-D-xylulose 5-phosphate: step 3/6. Catalyzes the phosphorylation of the position 2 hydroxy group of 4-diphosphocytidyl-2C-methyl-D-erythritol. The protein is 4-diphosphocytidyl-2-C-methyl-D-erythritol kinase of Campylobacter jejuni subsp. jejuni serotype O:2 (strain ATCC 700819 / NCTC 11168).